We begin with the raw amino-acid sequence, 144 residues long: Subtilase-type protease inhibitor (144 aa).

Residues methionine 1 to alanine 35 form the signal peptide. Cystine bridges form between cysteine 66–cysteine 81 and cysteine 102–cysteine 132.

Belongs to the protease inhibitor I16 (SSI) family. Homodimer.

It localises to the secreted. In terms of biological role, strong inhibitory activity toward subtilisin BPN' and, to a lesser extent, toward trypsin. The chain is Subtilase-type protease inhibitor (sti1) from Streptomyces coelicolor (strain ATCC BAA-471 / A3(2) / M145).